We begin with the raw amino-acid sequence, 79 residues long: DNA-directed RNA polymerase subunit omega (79 aa).

It belongs to the RNA polymerase subunit omega family. As to quaternary structure, the RNAP catalytic core consists of 2 alpha, 1 beta, 1 beta' and 1 omega subunit. When a sigma factor is associated with the core the holoenzyme is formed, which can initiate transcription.

It catalyses the reaction RNA(n) + a ribonucleoside 5'-triphosphate = RNA(n+1) + diphosphate. Its function is as follows. Promotes RNA polymerase assembly. Latches the N- and C-terminal regions of the beta' subunit thereby facilitating its interaction with the beta and alpha subunits. The polypeptide is DNA-directed RNA polymerase subunit omega (Thermotoga neapolitana (strain ATCC 49049 / DSM 4359 / NBRC 107923 / NS-E)).